The following is a 34-amino-acid chain: Conotoxin S4.3 (34 aa).

Glutamine 1 carries the post-translational modification Pyrrolidone carboxylic acid. A 4-carboxyglutamate modification is found at glutamate 3. Serine 7 carries an O-linked (HexNAc...) serine glycan. Residue threonine 9 is glycosylated (O-linked (HexNAc...) threonine). Proline 17, proline 22, proline 31, and proline 32 each carry 4-hydroxyproline.

The protein belongs to the conotoxin A superfamily. Contains 3 disulfide bonds. As to expression, expressed by the venom duct.

Its subcellular location is the secreted. Functionally, probable neurotoxin with ion channel inhibitor activity. This Conus striatus (Striated cone) protein is Conotoxin S4.3.